A 266-amino-acid polypeptide reads, in one-letter code: Putative deoxyribonuclease tatdn3 (266 aa).

Residues H9, H11, E103, H143, H166, and D214 each contribute to the Zn(2+) site.

This sequence belongs to the metallo-dependent hydrolases superfamily. TatD-type hydrolase family. The cofactor is Mn(2+). Ca(2+) is required as a cofactor. Requires Mg(2+) as cofactor. Zn(2+) serves as cofactor.

The protein resides in the nucleus. With respect to regulation, the 3'-exonuclease activity is sensitive to the metal ion present in the active site, whereas the AP endodeoxyribonuclease activity is observed in a variety of divalent metal cofactors. 3'-exoxonuclease activity is suppressed in the presence of Ca(2+), Zn(2+) and Ni(2+). In terms of biological role, exhibits 3'-exonuclease activities and apurinic/apyrimidinic (AP) endonuclease (in vitro). Show preferential AP endonuclease activity on double-stranded DNA substrates and 3'- exonuclease activity on single-stranded DNA. The chain is Putative deoxyribonuclease tatdn3 (tatdn3) from Danio rerio (Zebrafish).